A 919-amino-acid chain; its full sequence is Synphilin-1 (919 aa).

Disordered regions lie at residues 80 to 99, 108 to 140, and 287 to 313; these read SPLKHQPETLENNESDDQKN, GGESDLGPQPQELGPGDGVGGPPGKSSEPSTSL, and SSAAESKPEEQVSGLNRTSSQGPEERS. Residues 299 to 308 are compositionally biased toward polar residues; the sequence is SGLNRTSSQG. ANK repeat units follow at residues 349–380, 384–413, 419–448, and 456–485; these read NGNNLLHIAASQGHAECLQHLTSLMGEDCLNE, EKLTPAGLAIKNGQLECVRWMVSETEAIAE, DFPSLIHYAGCYGQEKILLWLLQFMQEQGI, and DGNSAVHVASQHGYLGCIQTLVEYGANVTM. Residues 515-552 adopt a coiled-coil conformation; that stretch reads CMSLASQVVKLTKQLKEQTVERVTLQNQLQQFLEAQKS. 3 disordered regions span residues 549 to 615, 666 to 713, and 728 to 919; these read AQKS…KDED, RLRQ…SMDS, and SGGR…NKAA. The segment covering 555–571 has biased composition (low complexity); it reads KSLPSSPSSPSSPASRK. An ANK 5 repeat occupies 603-632; that stretch reads ASSRARPKAKDEDSDKILRQLLGKEISENV. Residues 667-685 are compositionally biased toward low complexity; sequence LRQLMQRSLSESDTDSNNS. Basic and acidic residues predominate over residues 686–700; it reads EDPKTTPVRKADRPR. The ANK 6 repeat unit spans residues 699 to 729; the sequence is PRPQPIVESVESMDSAESLHLMIKKHTLASG. Low complexity predominate over residues 774–785; sequence PSGDPQQPSPDS. A compositionally biased stretch (basic and acidic residues) spans 833–842; the sequence is NGEKDKDKGR. Residues 844 to 854 are compositionally biased toward polar residues; the sequence is LQRTSTSNESG. The segment covering 874 to 886 has biased composition (low complexity); sequence NQNNNNNYQAANQ.

In terms of assembly, homodimer. Heterodimer of isoform 1 and isoform 2. Interacts with SIAH1, SIAH2, SNCA, RNF19A and PRKN. Isoform 2 has a strong tendency to form aggregates and can sequester isoform 1. In terms of processing, ubiquitinated; mediated by SIAH1, SIAH2 or RNF19A and leading to its subsequent proteasomal degradation. In the absence of proteasomal degradation, ubiquitinated SNCAIP accumulates in cytoplasmic inclusion bodies. Isoform 2 is subject to limited ubiquitination that does not lead to proteasomal degradation. In terms of tissue distribution, detected in brain (at protein level). Widely expressed, with highest levels in brain, heart and placenta.

Its subcellular location is the cytoplasm. Functionally, isoform 2 inhibits the ubiquitin ligase activity of SIAH1 and inhibits proteasomal degradation of target proteins. Isoform 2 inhibits autoubiquitination and proteasomal degradation of SIAH1, and thereby increases cellular levels of SIAH. Isoform 2 modulates SNCA monoubiquitination by SIAH1. This is Synphilin-1 (SNCAIP) from Homo sapiens (Human).